Consider the following 667-residue polypeptide: Protein OS-9 (667 aa).

A signal peptide spans 1-25 (MAAETLLSSLLGLLLLGLLLPATLT). The MRH domain maps to 108 to 230 (APCLLKTKDW…TIRTPRLCPH (123 aa)). A disulfide bridge connects residues Cys110 and Cys123. Residues Trp117, Trp118, and Gln130 each contribute to the a mannooligosaccharide derivative site. N-linked (GlcNAc...) asparagine glycosylation is present at Asn177. 2 disulfides stabilise this stretch: Cys181–Cys216 and Cys196–Cys228. A mannooligosaccharide derivative-binding residues include Asp182, Arg188, Glu212, and Tyr218. Disordered stretches follow at residues 262–450 (QADS…SDRE), 506–541 (EKQS…EHRV), and 636–667 (ERQR…EFDF). Composition is skewed to basic and acidic residues over residues 263–279 (ADSK…RQDP), 304–328 (ENSK…KEET), and 396–408 (PSRE…KGDP). The segment covering 410–429 (QQNEVEEEEDDEDEDEDEDE) has biased composition (acidic residues). Residues 430–450 (RQLLGEFEKELEGILLPSDRE) are compositionally biased toward basic and acidic residues. Positions 514 to 523 (KKHRKRRVVP) are enriched in basic residues. Residues 636–647 (ERQRQKELESNY) show a composition bias toward basic and acidic residues.

The protein belongs to the OS-9 family. Component of the HRD1 complex, which comprises at least SYNV1/HRD1, DERL1/2, FAM8A1, HERPUD1/HERP, OS9, SEL1L and UBE2J1. FAM8A1 is stabilized by interaction with SYNV1, which prevents its proteasomal degradation. OS9 and UBE2J1 recruitment to the complex may be mediated by SEL1L. Through this complex, may interact with ERLEC1 and HSPA5. Interacts (via C-terminus) with CPNE6 (via second C2 domain); this interaction occurs in a calcium-dependent manner in vitro. Interacts with CREB3. Post-translationally, intramolecular disulfide bonds.

It localises to the endoplasmic reticulum lumen. Lectin component of the HRD1 complex, which functions in endoplasmic reticulum (ER) quality control and ER-associated degradation (ERAD). Specifically recognizes and binds improperly folded glycoproteins as well as hyperglycosylated proteins, retain them in the ER, and transfers them to the ubiquitination machinery and promote their degradation. Possible targets include TRPV4 as well as hyperglycosylated HSP90B1. This is Protein OS-9 (OS9) from Bos taurus (Bovine).